The following is a 181-amino-acid chain: ATP-dependent protease subunit HslV (181 aa).

T7 is a catalytic residue. Na(+)-binding residues include A162, C165, and T168.

The protein belongs to the peptidase T1B family. HslV subfamily. A double ring-shaped homohexamer of HslV is capped on each side by a ring-shaped HslU homohexamer. The assembly of the HslU/HslV complex is dependent on binding of ATP.

The protein resides in the cytoplasm. The enzyme catalyses ATP-dependent cleavage of peptide bonds with broad specificity.. With respect to regulation, allosterically activated by HslU binding. In terms of biological role, protease subunit of a proteasome-like degradation complex believed to be a general protein degrading machinery. In Coxiella burnetii (strain RSA 331 / Henzerling II), this protein is ATP-dependent protease subunit HslV.